A 545-amino-acid chain; its full sequence is Glucose-6-phosphate isomerase (545 aa).

Residue glutamate 351 is the Proton donor of the active site. Catalysis depends on residues histidine 382 and lysine 510.

This sequence belongs to the GPI family.

Its subcellular location is the cytoplasm. It carries out the reaction alpha-D-glucose 6-phosphate = beta-D-fructose 6-phosphate. It functions in the pathway carbohydrate biosynthesis; gluconeogenesis. The protein operates within carbohydrate degradation; glycolysis; D-glyceraldehyde 3-phosphate and glycerone phosphate from D-glucose: step 2/4. Catalyzes the reversible isomerization of glucose-6-phosphate to fructose-6-phosphate. In Shewanella baltica (strain OS185), this protein is Glucose-6-phosphate isomerase.